The primary structure comprises 390 residues: Protein dom34 (390 aa).

It belongs to the eukaryotic release factor 1 family. Pelota subfamily. As to quaternary structure, component of the Dom34-Hbs1 complex, also named Pelota-HBS1L complex, composed of dom34 and hbs1. A divalent metal cation is required as a cofactor.

The protein localises to the cytoplasm. Its function is as follows. Component of the Dom34-Hbs1 complex, a complex that recognizes stalled ribosomes and triggers the No-Go Decay (NGD) pathway. In the Dom34-Hbs1 complex, dom34 recognizes ribosomes stalled at the 3' end of an mRNA and engages stalled ribosomes by destabilizing mRNA in the mRNA channel. Following ribosome-binding, the Dom34-Hbs1 complex promotes the disassembly of stalled ribosomes, followed by degradation of damaged mRNAs as part of the NGD pathway. The polypeptide is Protein dom34 (Schizosaccharomyces pombe (strain 972 / ATCC 24843) (Fission yeast)).